The sequence spans 363 residues: Fructose-bisphosphate aldolase C-B (363 aa).

The substrate site is built by R56 and K147. The Proton acceptor role is filled by E188. K230 serves as the catalytic Schiff-base intermediate with dihydroxyacetone-P.

This sequence belongs to the class I fructose-bisphosphate aldolase family. As to quaternary structure, homotetramer.

The catalysed reaction is beta-D-fructose 1,6-bisphosphate = D-glyceraldehyde 3-phosphate + dihydroxyacetone phosphate. It participates in carbohydrate degradation; glycolysis; D-glyceraldehyde 3-phosphate and glycerone phosphate from D-glucose: step 4/4. This Danio rerio (Zebrafish) protein is Fructose-bisphosphate aldolase C-B (aldocb).